Here is a 666-residue protein sequence, read N- to C-terminus: N-acetylgalactosaminyltransferase 6 (666 aa).

The Cytoplasmic segment spans residues 1–11; it reads MRRPNLKWIVK. A helical; Signal-anchor for type II membrane protein membrane pass occupies residues 12–31; the sequence is ASLLLLISLTLFVLITSWIS. Residues 32 to 666 lie on the Lumenal side of the membrane; sequence STPYTNKPVH…NYSQDLVLSL (635 aa). A disordered region spans residues 90-126; sequence EPVEEEVDNPHPADDEPQQQPQEELQMAAPADASVKK. A compositionally biased stretch (low complexity) spans 107–120; it reads QQQPQEELQMAAPA. Residue N181 is glycosylated (N-linked (GlcNAc...) asparagine). Cystine bridges form between C192–C421, C412–C491, C531–C548, C577–C594, and C621–C636. The catalytic subdomain A stretch occupies residues 201–311; sequence LPTVSVIIIF…YNWLPPLLEP (111 aa). The substrate site is built by D242 and R272. N285 is a glycosylation site (N-linked (GlcNAc...) asparagine). D295 contributes to the Mn(2+) binding site. S296 contacts substrate. Position 297 (H297) interacts with Mn(2+). The catalytic subdomain B stretch occupies residues 367 to 429; the sequence is PFKSPIMAGG…PCSRIGHIYR (63 aa). Position 398 (W398) interacts with substrate. H426 provides a ligand contact to Mn(2+). Substrate is bound at residue R429. Residues 518-648 enclose the Ricin B-type lectin domain; sequence AMGALQNVGN…DNRFQQWNFG (131 aa). 2 N-linked (GlcNAc...) asparagine glycosylation sites follow: N651 and N657.

The protein belongs to the glycosyltransferase 2 family. GalNAc-T subfamily. Requires Mn(2+) as cofactor. In terms of tissue distribution, expressed during oogenesis, in the somatically derived follicle cells that surround the developing oocyte, which are involved in the maturation of the oocyte and construction of the egg shell, as well as playing a role in subsequent embryonic pattern formation. Expressed in the salivary glands from embryonic stage 12 onwards, becoming stronger at stage 13. During embryonic stages 12-13, also expressed in the posterior midgut and hindgut. During embryonic stages 14-15, expression continues in the hindgut. Expression is detected in the epidermis and antennomaxillary complex during embryonic stages 16-17. In third instar larvae, ubiquitously expressed in wing, eye-antennal, leg and haltere imaginal disks.

Its subcellular location is the golgi apparatus membrane. The catalysed reaction is L-seryl-[protein] + UDP-N-acetyl-alpha-D-galactosamine = a 3-O-[N-acetyl-alpha-D-galactosaminyl]-L-seryl-[protein] + UDP + H(+). The enzyme catalyses L-threonyl-[protein] + UDP-N-acetyl-alpha-D-galactosamine = a 3-O-[N-acetyl-alpha-D-galactosaminyl]-L-threonyl-[protein] + UDP + H(+). Its pathway is protein modification; protein glycosylation. Glycopeptide transferase involved in O-linked oligosaccharide biosynthesis, which catalyzes the transfer of an N-acetyl-D-galactosamine residue to an already glycosylated peptide. In contrast to other proteins of the family, it does not act as a peptide transferase that transfers GalNAc onto serine or threonine residue on the protein receptor, but instead requires the prior addition of a GalNAc on a peptide before adding additional GalNAc moieties. Some peptide transferase activity is however not excluded, considering that its appropriate peptide substrate may remain unidentified. Prefers the diglycosylated Muc5AC-3/13 as substrate. Might have a role in protein O-glycosylation in the Golgi and thereby in establishing and/or maintaining a proper secretory apparatus structure. The chain is N-acetylgalactosaminyltransferase 6 from Drosophila melanogaster (Fruit fly).